A 706-amino-acid chain; its full sequence is Integrator complex subunit 13 (706 aa).

A disordered region spans residues 564 to 603 (PPEEEERKKRGRKREDKEDKSEKAVKDYEQEKSWQDSERL). The stretch at 567–622 (EEERKKRGRKREDKEDKSEKAVKDYEQEKSWQDSERLKGILERGKEELAEAEIIKD) forms a coiled coil. A Nuclear localization signal (NLS) motif is present at residues 572–582 (KRGRKREDKED). Residue K611 forms a Glycyl lysine isopeptide (Lys-Gly) (interchain with G-Cter in SUMO2) linkage. Residues 615–636 (AEAEIIKDSPDSPEPPNKKPLV) show a composition bias toward basic and acidic residues. The disordered stretch occupies residues 615–650 (AEAEIIKDSPDSPEPPNKKPLVEMDETPQVEKSKGP). 3 positions are modified to phosphoserine: S623, S626, and S678. The tract at residues 649 to 694 (GPVSLLSLWSNRINTANSRKHQEFAGRLNSVNNRAELYQHLKEENG) is cleavage module binding motif (CMBM).

The protein belongs to the Integrator subunit 13 family. In terms of assembly, component of the Integrator complex, composed of core subunits INTS1, INTS2, INTS3, INTS4, INTS5, INTS6, INTS7, INTS8, INTS9/RC74, INTS10, INTS11/CPSF3L, INTS12, INTS13, INTS14 and INTS15. The core complex associates with protein phosphatase 2A subunits PPP2CA and PPP2R1A, to form the Integrator-PP2A (INTAC) complex. INTS13 is part of the tail subcomplex, composed of INTS10, INTS13, INTS14 and INTS15. Interacts with transcription factors ZNF609 and ZNF655. Interacts with PAFAH1B1; this interaction may be required for proper recruitment of dynein complexes to the nuclear envelope at prophase. In terms of tissue distribution, widely expressed. Tends to be up-regulated in seminomas compared to normal testis.

It localises to the nucleus. The protein resides in the cytoplasm. In terms of biological role, component of the integrator complex, a multiprotein complex that terminates RNA polymerase II (Pol II) transcription in the promoter-proximal region of genes. The integrator complex provides a quality checkpoint during transcription elongation by driving premature transcription termination of transcripts that are unfavorably configured for transcriptional elongation: the complex terminates transcription by (1) catalyzing dephosphorylation of the C-terminal domain (CTD) of Pol II subunit POLR2A/RPB1 and SUPT5H/SPT5, (2) degrading the exiting nascent RNA transcript via endonuclease activity and (3) promoting the release of Pol II from bound DNA. The integrator complex is also involved in terminating the synthesis of non-coding Pol II transcripts, such as enhancer RNAs (eRNAs), small nuclear RNAs (snRNAs), telomerase RNAs and long non-coding RNAs (lncRNAs). Within the integrator complex, INTS13 is part of the integrator tail module and acts as a platform for the recruitment of transcription factors at promoters. At prophase, mediates recruitment of cytoplasmic dynein to the nuclear envelope, a step important for proper centrosome-nucleus coupling. At G2/M phase, may be required for proper spindle formation and execution of cytokinesis. The sequence is that of Integrator complex subunit 13 from Homo sapiens (Human).